The following is a 389-amino-acid chain: S-adenosylmethionine synthase 2 (389 aa).

Histidine 17 is a binding site for ATP. Aspartate 19 is a binding site for Mg(2+). A K(+)-binding site is contributed by glutamate 45. 2 residues coordinate L-methionine: glutamate 58 and glutamine 102. The flexible loop stretch occupies residues 102–112 (QSADIAVGVDA). Residues 166–168 (DSK), 231–232 (RF), aspartate 240, 246–247 (RK), alanine 263, and lysine 267 contribute to the ATP site. An L-methionine-binding site is contributed by aspartate 240. An L-methionine-binding site is contributed by lysine 271.

This sequence belongs to the AdoMet synthase family. Homotetramer; dimer of dimers. Requires Mg(2+) as cofactor. It depends on K(+) as a cofactor.

The protein resides in the cytoplasm. It catalyses the reaction L-methionine + ATP + H2O = S-adenosyl-L-methionine + phosphate + diphosphate. Its pathway is amino-acid biosynthesis; S-adenosyl-L-methionine biosynthesis; S-adenosyl-L-methionine from L-methionine: step 1/1. Its function is as follows. Catalyzes the formation of S-adenosylmethionine (AdoMet) from methionine and ATP. The overall synthetic reaction is composed of two sequential steps, AdoMet formation and the subsequent tripolyphosphate hydrolysis which occurs prior to release of AdoMet from the enzyme. This is S-adenosylmethionine synthase 2 from Rhodospirillum rubrum (strain ATCC 11170 / ATH 1.1.1 / DSM 467 / LMG 4362 / NCIMB 8255 / S1).